The primary structure comprises 131 residues: Sirohydrochlorin cobaltochelatase (131 aa).

His-12 serves as the catalytic Proton acceptor. Co(2+) is bound by residues His-12 and His-78. Residues His-12 and His-78 each contribute to the Ni(2+) site. A substrate-binding site is contributed by 73–78; the sequence is LASGVH.

The protein belongs to the CbiX family. CbiXS subfamily. Homotetramer; dimer of dimers.

It catalyses the reaction Co-sirohydrochlorin + 2 H(+) = sirohydrochlorin + Co(2+). It carries out the reaction Ni-sirohydrochlorin + 2 H(+) = sirohydrochlorin + Ni(2+). Its pathway is cofactor biosynthesis; adenosylcobalamin biosynthesis; cob(II)yrinate a,c-diamide from sirohydrochlorin (anaerobic route): step 1/10. In terms of biological role, catalyzes the insertion of Co(2+) into sirohydrochlorin as part of the anaerobic pathway to cobalamin biosynthesis. Involved in the biosynthesis of the unique nickel-containing tetrapyrrole coenzyme F430, the prosthetic group of methyl-coenzyme M reductase (MCR), which plays a key role in methanogenesis and anaerobic methane oxidation. Catalyzes the insertion of Ni(2+) into sirohydrochlorin to yield Ni-sirohydrochlorin. This chain is Sirohydrochlorin cobaltochelatase, found in Methanococcoides burtonii (strain DSM 6242 / NBRC 107633 / OCM 468 / ACE-M).